Consider the following 479-residue polypeptide: Sulfate adenylyltransferase subunit 1 (479 aa).

The tr-type G domain maps to lysine 25–arginine 239. The tract at residues glycine 34–serine 41 is G1. Glycine 34–serine 41 contributes to the GTP binding site. A G2 region spans residues glycine 92–aspartate 96. The G3 stretch occupies residues aspartate 113–glycine 116. Residues aspartate 113–histidine 117 and asparagine 168–aspartate 171 contribute to the GTP site. The G4 stretch occupies residues asparagine 168 to aspartate 171. Positions serine 206 to leucine 208 are G5.

Belongs to the TRAFAC class translation factor GTPase superfamily. Classic translation factor GTPase family. CysN/NodQ subfamily. As to quaternary structure, heterodimer composed of CysD, the smaller subunit, and CysN.

It catalyses the reaction sulfate + ATP + H(+) = adenosine 5'-phosphosulfate + diphosphate. The protein operates within sulfur metabolism; hydrogen sulfide biosynthesis; sulfite from sulfate: step 1/3. Its function is as follows. With CysD forms the ATP sulfurylase (ATPS) that catalyzes the adenylation of sulfate producing adenosine 5'-phosphosulfate (APS) and diphosphate, the first enzymatic step in sulfur assimilation pathway. APS synthesis involves the formation of a high-energy phosphoric-sulfuric acid anhydride bond driven by GTP hydrolysis by CysN coupled to ATP hydrolysis by CysD. The sequence is that of Sulfate adenylyltransferase subunit 1 from Salmonella heidelberg (strain SL476).